The following is a 140-amino-acid chain: Large ribosomal subunit protein uL11 (140 aa).

It belongs to the universal ribosomal protein uL11 family. Part of the ribosomal stalk of the 50S ribosomal subunit. Interacts with L10 and the large rRNA to form the base of the stalk. L10 forms an elongated spine to which L12 dimers bind in a sequential fashion forming a multimeric L10(L12)X complex. Post-translationally, one or more lysine residues are methylated.

Forms part of the ribosomal stalk which helps the ribosome interact with GTP-bound translation factors. This is Large ribosomal subunit protein uL11 from Desulfovibrio desulfuricans (strain ATCC 27774 / DSM 6949 / MB).